The chain runs to 399 residues: Alpha-tubulin N-acetyltransferase (399 aa).

The N-acetyltransferase domain maps to 1 to 178; that stretch reads MEFNFIINKL…NNFVVFDQYF (178 aa). Acetyl-CoA-binding positions include 112 to 125 and 148 to 157; these read FYVH…GYGK and SPKLIAFLKK. Positions 183–193 are enriched in polar residues; that stretch reads SSQNKQNQNTR. The disordered stretch occupies residues 183–223; the sequence is SSQNKQNQNTRSYSQPYSDYSSQIPTNYPQQQQQQSNSKSY. Residues 194-223 are compositionally biased toward low complexity; that stretch reads SYSQPYSDYSSQIPTNYPQQQQQQSNSKSY.

It belongs to the acetyltransferase ATAT1 family.

It catalyses the reaction L-lysyl-[alpha-tubulin] + acetyl-CoA = N(6)-acetyl-L-lysyl-[alpha-tubulin] + CoA + H(+). Functionally, specifically acetylates 'Lys-40' in alpha-tubulin on the lumenal side of microtubules. Promotes microtubule destabilization and accelerates microtubule dynamics; this activity may be independent of acetylation activity. Acetylates alpha-tubulin with a slow enzymatic rate, due to a catalytic site that is not optimized for acetyl transfer. Enters the microtubule through each end and diffuses quickly throughout the lumen of microtubules. Acetylates only long/old microtubules because of its slow acetylation rate since it does not have time to act on dynamically unstable microtubules before the enzyme is released. This chain is Alpha-tubulin N-acetyltransferase, found in Tetrahymena thermophila (strain SB210).